A 532-amino-acid chain; its full sequence is Cyclin-L1 (532 aa).

Cyclin-like stretches follow at residues 94-196 (ELIQ…RVLK) and 209-293 (KIIV…ETLR). A Phosphothreonine modification is found at Thr-331. Residues 332-532 (PALSTLGGFS…SRSGHGRHRR (201 aa)) form a disordered region. 2 positions are modified to phosphoserine: Ser-341 and Ser-344. Residues Lys-345 and Lys-353 each participate in a glycyl lysine isopeptide (Lys-Gly) (interchain with G-Cter in SUMO2) cross-link. Basic and acidic residues predominate over residues 348–358 (SPREVKAEEKS). 2 positions are modified to phosphoserine: Ser-358 and Ser-361. Positions 367–376 (VKKEPEDRQQ) are enriched in basic and acidic residues. Residue Lys-368 forms a Glycyl lysine isopeptide (Lys-Gly) (interchain with G-Cter in SUMO2) linkage. Position 380 is a phosphoserine (Ser-380). 4 stretches are compositionally biased toward basic residues: residues 388–424 (DSKR…RRSR), 444–458 (RRHH…KAKH), 466–482 (SNRH…RSQS), and 492–504 (KKHR…HRDR). The segment at 396–438 (RSASRSRSRTRSRSRSHSPRRHYNNRRSRSGTYSSRSRSRSRS) is RS. Ser-451 is subject to Phosphoserine. Positions 505–514 (RERSRSFERS) are enriched in basic and acidic residues. The segment covering 515–532 (HKGKHHGGSRSGHGRHRR) has biased composition (basic residues).

Belongs to the cyclin family. Cyclin L subfamily. Interacts with POLR2A via its hyperphosphorylated C-terminal domain (CTD). Interacts with CDK11A, CDK11B, CDK12 and CDK13. May form a ternary complex with CDK11B and casein kinase II (CKII). Interacts with pre-mRNA-splicing factors, including at least SRSF1, SRSF2 and SRSF7/SLU7. Widely expressed (at protein level).

The protein resides in the nucleus speckle. Its subcellular location is the nucleus. It localises to the nucleoplasm. The protein localises to the cytoplasm. In terms of biological role, involved in pre-mRNA splicing. Functions in association with cyclin-dependent kinases (CDKs). May play a role in the regulation of RNA polymerase II (pol II). Inhibited by the CDK-specific inhibitor CDKN1A/p21. The chain is Cyclin-L1 (Ccnl1) from Mus musculus (Mouse).